The sequence spans 35 residues: Photosystem II reaction center protein M (35 aa).

A helical membrane pass occupies residues 7 to 27; the sequence is GLLATILVILVPSIFLVILYV.

Belongs to the PsbM family. PSII is composed of 1 copy each of membrane proteins PsbA, PsbB, PsbC, PsbD, PsbE, PsbF, PsbH, PsbI, PsbJ, PsbK, PsbL, PsbM, PsbT, PsbX, PsbY, PsbZ, Psb30/Ycf12, peripheral proteins PsbO, CyanoQ (PsbQ), PsbU, PsbV and a large number of cofactors. It forms dimeric complexes.

It localises to the cellular thylakoid membrane. Its function is as follows. One of the components of the core complex of photosystem II (PSII). PSII is a light-driven water:plastoquinone oxidoreductase that uses light energy to abstract electrons from H(2)O, generating O(2) and a proton gradient subsequently used for ATP formation. It consists of a core antenna complex that captures photons, and an electron transfer chain that converts photonic excitation into a charge separation. This subunit is found at the monomer-monomer interface. The protein is Photosystem II reaction center protein M of Synechococcus sp. (strain JA-3-3Ab) (Cyanobacteria bacterium Yellowstone A-Prime).